The sequence spans 611 residues: Zinc metalloproteinase-disintegrin-like MTP9 (611 aa).

A signal peptide spans 1-20 (MIEVLLVTICFTVFPYQGSS). A propeptide spanning residues 21–191 (IILESGNVND…DEPIEKISQL (171 aa)) is cleaved from the precursor. A Peptidase M12B domain is found at 205-401 (KYIELYVVVD…VRPQCILNKP (197 aa)). Ca(2+) is bound at residue glutamate 208. Asparagine 282 carries N-linked (GlcNAc...) asparagine glycosylation. Aspartate 292 is a Ca(2+) binding site. 3 cysteine pairs are disulfide-bonded: cysteine 316–cysteine 396, cysteine 356–cysteine 380, and cysteine 358–cysteine 363. Positions 341, 345, and 351 each coordinate Zn(2+). Residues cysteine 396, asparagine 399, asparagine 414, phenylalanine 416, glutamate 418, glutamate 421, and aspartate 424 each contribute to the Ca(2+) site. Residues 409–493 (PPVCGNYFVE…ECPTDSFQRN (85 aa)) enclose the Disintegrin domain. 15 disulfide bridges follow: cysteine 412–cysteine 441, cysteine 423–cysteine 436, cysteine 425–cysteine 431, cysteine 435–cysteine 456, cysteine 447–cysteine 453, cysteine 452–cysteine 478, cysteine 465–cysteine 485, cysteine 472–cysteine 504, cysteine 497–cysteine 509, cysteine 516–cysteine 566, cysteine 531–cysteine 573, cysteine 541–cysteine 575, cysteine 544–cysteine 554, cysteine 561–cysteine 599, and cysteine 593–cysteine 604. The D/ECD-tripeptide signature appears at 471 to 473 (DCD). Residues aspartate 473, leucine 474, glutamate 476, and aspartate 488 each contribute to the Ca(2+) site. Residues asparagine 548 and asparagine 570 are each glycosylated (N-linked (GlcNAc...) asparagine).

This sequence belongs to the venom metalloproteinase (M12B) family. P-III subfamily. In terms of assembly, monomer. It depends on Zn(2+) as a cofactor. In terms of tissue distribution, expressed by the venom gland.

It is found in the secreted. Snake venom zinc metalloproteinase that may impair hemostasis in the prey. This Drysdalia coronoides (White-lipped snake) protein is Zinc metalloproteinase-disintegrin-like MTP9.